The chain runs to 129 residues: Glycine cleavage system H protein (129 aa).

Residues 24 to 106 form the Lipoyl-binding domain; the sequence is SYTVGITEHA…YGEGWFFRVM (83 aa). N6-lipoyllysine is present on K65.

Belongs to the GcvH family. As to quaternary structure, the glycine cleavage system is composed of four proteins: P, T, L and H. Requires (R)-lipoate as cofactor.

In terms of biological role, the glycine cleavage system catalyzes the degradation of glycine. The H protein shuttles the methylamine group of glycine from the P protein to the T protein. The chain is Glycine cleavage system H protein from Shewanella baltica (strain OS185).